The primary structure comprises 233 residues: NAD-dependent protein deacylase (233 aa).

A Deacetylase sirtuin-type domain is found at 1 to 230 (MKNIMILSGA…ALDIENFMKD (230 aa)). 9-28 (GAGLSAPSGLKTFRDNDGLW) provides a ligand contact to NAD(+). The substrate site is built by tyrosine 53 and arginine 56. 88–91 (QNVD) contributes to the NAD(+) binding site. Histidine 106 serves as the catalytic Proton acceptor. Cysteine 114, cysteine 117, cysteine 133, and cysteine 136 together coordinate Zn(2+). Residues 172–174 (GTS) and 200–202 (NLE) each bind NAD(+).

Belongs to the sirtuin family. Class III subfamily. The cofactor is Zn(2+).

The protein resides in the cytoplasm. It carries out the reaction N(6)-acetyl-L-lysyl-[protein] + NAD(+) + H2O = 2''-O-acetyl-ADP-D-ribose + nicotinamide + L-lysyl-[protein]. The enzyme catalyses N(6)-succinyl-L-lysyl-[protein] + NAD(+) + H2O = 2''-O-succinyl-ADP-D-ribose + nicotinamide + L-lysyl-[protein]. NAD-dependent lysine deacetylase and desuccinylase that specifically removes acetyl and succinyl groups on target proteins. Modulates the activities of several proteins which are inactive in their acylated form. This is NAD-dependent protein deacylase from Campylobacter jejuni subsp. jejuni serotype O:2 (strain ATCC 700819 / NCTC 11168).